Reading from the N-terminus, the 140-residue chain is Large ribosomal subunit protein uL16 (140 aa).

Belongs to the universal ribosomal protein uL16 family. As to quaternary structure, part of the 50S ribosomal subunit.

In terms of biological role, binds 23S rRNA and is also seen to make contacts with the A and possibly P site tRNAs. The chain is Large ribosomal subunit protein uL16 from Citrifermentans bemidjiense (strain ATCC BAA-1014 / DSM 16622 / JCM 12645 / Bem) (Geobacter bemidjiensis).